The primary structure comprises 548 residues: DNA-binding protein REPIN1 (548 aa).

A disordered region spans residues 1 to 47 (MLERRCRGPTAMGPAHPWLFSGPSQESSQPNRGLRYQGKSVAQPGGP). Residues 22-31 (GPSQESSQPN) are compositionally biased toward polar residues. Ser-27 bears the Phosphoserine mark. Lys-39 carries the N6-acetyllysine modification. A C2H2-type 1; atypical zinc finger spans residues 53–75 (HRCAHCRKRFPGWVALWLHTRRC). C2H2-type zinc fingers lie at residues 81 to 103 (LPCH…LQVH) and 112 to 134 (FICH…LRAH). The C2H2-type 4; atypical zinc-finger motif lies at 141–163 (ITCPECNKRFWRQKQLRAHLRRC). C2H2-type zinc fingers lie at residues 173 to 195 (FICG…KRVH), 232 to 254 (FQCA…RRVH), 260 to 282 (HQCP…RRIH), 288 to 310 (YPCT…SKIH), 356 to 378 (HSCT…QRQH), 384 to 406 (FTCT…SRVH), 412 to 434 (FACE…RRDH), 440 to 462 (FVCP…RRIH), 468 to 490 (YVCP…RRIH), 496 to 518 (YACP…RKSH), and 524 to 546 (FCCA…QKKH). Lys-272 carries the post-translational modification N6-acetyllysine.

In terms of assembly, homodimers and homomultimers. Found in a complex with RIP60 and RIP100. In terms of tissue distribution, expressed in the liver and in subcutaneous and visceral adipose tissue.

Its subcellular location is the nucleus. The protein resides in the cytoplasm. It localises to the cytosol. Its function is as follows. Sequence-specific double-stranded DNA-binding protein. Binds ATT-rich and T-rich DNA sequences and facilitates DNA bending. May regulate the expression of genes involved in cellular fatty acid import, including SCARB1/CD36, and genes involved in lipid droplet formation. May regulate the expression of LCN2, and thereby influence iron metabolism and apoptosis-related pathways. May regulate the expression of genes involved in glucose transport. The sequence is that of DNA-binding protein REPIN1 (Repin1) from Rattus norvegicus (Rat).